The following is a 481-amino-acid chain: Aspartyl/glutamyl-tRNA(Asn/Gln) amidotransferase subunit B (481 aa).

This sequence belongs to the GatB/GatE family. GatB subfamily. Heterotrimer of A, B and C subunits.

It carries out the reaction L-glutamyl-tRNA(Gln) + L-glutamine + ATP + H2O = L-glutaminyl-tRNA(Gln) + L-glutamate + ADP + phosphate + H(+). It catalyses the reaction L-aspartyl-tRNA(Asn) + L-glutamine + ATP + H2O = L-asparaginyl-tRNA(Asn) + L-glutamate + ADP + phosphate + 2 H(+). Functionally, allows the formation of correctly charged Asn-tRNA(Asn) or Gln-tRNA(Gln) through the transamidation of misacylated Asp-tRNA(Asn) or Glu-tRNA(Gln) in organisms which lack either or both of asparaginyl-tRNA or glutaminyl-tRNA synthetases. The reaction takes place in the presence of glutamine and ATP through an activated phospho-Asp-tRNA(Asn) or phospho-Glu-tRNA(Gln). The sequence is that of Aspartyl/glutamyl-tRNA(Asn/Gln) amidotransferase subunit B from Carboxydothermus hydrogenoformans (strain ATCC BAA-161 / DSM 6008 / Z-2901).